Here is a 176-residue protein sequence, read N- to C-terminus: Disulfide bond formation protein B (176 aa).

Residues 1 to 14 (MLQFLNRCSRGRGA) are Cytoplasmic-facing. A helical membrane pass occupies residues 15–31 (WLLMALTAFLLELTALY). Over 32–49 (FQHIMLLQPCVMCIYERV) the chain is Periplasmic. The cysteines at positions 41 and 44 are disulfide-linked. The helical transmembrane segment at 50–65 (ALFGILGASLLGAIAP) threads the bilayer. Topologically, residues 66-71 (RSPLRY) are cytoplasmic. Residues 72 to 89 (LAIAVWIYSAWKGVQLAW) traverse the membrane as a helical segment. Residues 90 to 144 (AHTMLQLNPSPFNTCDFFVNFPSWLPLDKWLPAVFAASGDCSERQWQFMSLEMPQ) are Periplasmic-facing. A disulfide bridge connects residues cysteine 104 and cysteine 130. A helical transmembrane segment spans residues 145–163 (WLVGIFAAYLVIAVLVLIS). At 164 to 176 (QFVKPKRRDLFGR) the chain is on the cytoplasmic side.

The protein belongs to the DsbB family.

Its subcellular location is the cell inner membrane. Its function is as follows. Required for disulfide bond formation in some periplasmic proteins. Acts by oxidizing the DsbA protein. The protein is Disulfide bond formation protein B of Yersinia pestis bv. Antiqua (strain Nepal516).